The primary structure comprises 168 residues: Peptidoglycan-associated lipoprotein (168 aa).

A signal peptide spans 1–24 (MRRIQSIARSPIAIALFMSLAVAG). Cysteine 25 is lipidated: N-palmitoyl cysteine. Residue cysteine 25 is the site of S-diacylglycerol cysteine attachment. Positions 51 to 167 (QDFTVNVGDR…RAVTVLNGAG (117 aa)) constitute an OmpA-like domain.

This sequence belongs to the Pal lipoprotein family. In terms of assembly, the Tol-Pal system is composed of five core proteins: the inner membrane proteins TolA, TolQ and TolR, the periplasmic protein TolB and the outer membrane protein Pal. They form a network linking the inner and outer membranes and the peptidoglycan layer. The N-terminus is blocked.

Its subcellular location is the cell outer membrane. Part of the Tol-Pal system, which plays a role in outer membrane invagination during cell division and is important for maintaining outer membrane integrity. The protein is Peptidoglycan-associated lipoprotein of Brucella abortus biovar 1 (strain 9-941).